Consider the following 790-residue polypeptide: LPS-assembly protein LptD (790 aa).

The first 20 residues, 1 to 20, serve as a signal peptide directing secretion; that stretch reads MRMLRWLILSAFSVAGAVQA.

Belongs to the LptD family. Component of the lipopolysaccharide transport and assembly complex. Interacts with LptE and LptA.

The protein resides in the cell outer membrane. In terms of biological role, together with LptE, is involved in the assembly of lipopolysaccharide (LPS) at the surface of the outer membrane. This Bordetella parapertussis (strain 12822 / ATCC BAA-587 / NCTC 13253) protein is LPS-assembly protein LptD.